The sequence spans 470 residues: Uronate isomerase (470 aa).

Belongs to the metallo-dependent hydrolases superfamily. Uronate isomerase family.

It catalyses the reaction D-glucuronate = D-fructuronate. The enzyme catalyses aldehydo-D-galacturonate = keto-D-tagaturonate. It participates in carbohydrate metabolism; pentose and glucuronate interconversion. The sequence is that of Uronate isomerase from Salmonella agona (strain SL483).